Here is a 450-residue protein sequence, read N- to C-terminus: Putative serine/threonine-protein kinase R517/R518 (450 aa).

One can recognise a Protein kinase domain in the interval 9–290 (KMTDTVLGKG…WSELFHHYWF (282 aa)). ATP-binding positions include 15 to 23 (LGKGGFSEV) and K38. The active-site Proton acceptor is D140.

Belongs to the protein kinase superfamily. Ser/Thr protein kinase family.

It catalyses the reaction L-seryl-[protein] + ATP = O-phospho-L-seryl-[protein] + ADP + H(+). It carries out the reaction L-threonyl-[protein] + ATP = O-phospho-L-threonyl-[protein] + ADP + H(+). The polypeptide is Putative serine/threonine-protein kinase R517/R518 (Acanthamoeba polyphaga mimivirus (APMV)).